A 498-amino-acid polypeptide reads, in one-letter code: ATP synthase subunit beta, chloroplastic (498 aa).

172 to 179 is an ATP binding site; sequence GGAGVGKT.

The protein belongs to the ATPase alpha/beta chains family. In terms of assembly, F-type ATPases have 2 components, CF(1) - the catalytic core - and CF(0) - the membrane proton channel. CF(1) has five subunits: alpha(3), beta(3), gamma(1), delta(1), epsilon(1). CF(0) has four main subunits: a(1), b(1), b'(1) and c(9-12).

Its subcellular location is the plastid. The protein localises to the chloroplast thylakoid membrane. It carries out the reaction ATP + H2O + 4 H(+)(in) = ADP + phosphate + 5 H(+)(out). Its function is as follows. Produces ATP from ADP in the presence of a proton gradient across the membrane. The catalytic sites are hosted primarily by the beta subunits. The chain is ATP synthase subunit beta, chloroplastic from Castanea sativa (Sweet chestnut).